The primary structure comprises 96 residues: Cell division topological specificity factor (96 aa).

Belongs to the MinE family.

Functionally, prevents the cell division inhibition by proteins MinC and MinD at internal division sites while permitting inhibition at polar sites. This ensures cell division at the proper site by restricting the formation of a division septum at the midpoint of the long axis of the cell. The protein is Cell division topological specificity factor of Nitrosococcus oceani (strain ATCC 19707 / BCRC 17464 / JCM 30415 / NCIMB 11848 / C-107).